The sequence spans 377 residues: 23S rRNA (uracil(747)-C(5))-methyltransferase RlmC (377 aa).

Residues Cys-3, Cys-11, Cys-14, and Cys-87 each coordinate [4Fe-4S] cluster. The S-adenosyl-L-methionine site is built by Gln-212, Phe-241, Glu-262, and Asn-307. The active-site Nucleophile is Cys-334.

Belongs to the class I-like SAM-binding methyltransferase superfamily. RNA M5U methyltransferase family. RlmC subfamily.

The enzyme catalyses uridine(747) in 23S rRNA + S-adenosyl-L-methionine = 5-methyluridine(747) in 23S rRNA + S-adenosyl-L-homocysteine + H(+). In terms of biological role, catalyzes the formation of 5-methyl-uridine at position 747 (m5U747) in 23S rRNA. In Photorhabdus laumondii subsp. laumondii (strain DSM 15139 / CIP 105565 / TT01) (Photorhabdus luminescens subsp. laumondii), this protein is 23S rRNA (uracil(747)-C(5))-methyltransferase RlmC.